The sequence spans 268 residues: 14-3-3-like protein GF14 upsilon (268 aa).

2 positions are modified to phosphoserine: S69 and S192. At T213 the chain carries Phosphothreonine. The interval 243–268 (EAGDDIKEAPKEVQKVDEQAQPPPSQ) is disordered. A compositionally biased stretch (basic and acidic residues) spans 246–260 (DDIKEAPKEVQKVDE). S267 carries the phosphoserine modification.

Belongs to the 14-3-3 family. As to quaternary structure, interacts with EDE1. Interacts with DREB1A and DREB1B in the nucleus. Interacts with CINV1.

Its subcellular location is the cytoplasm. The protein localises to the nucleus. In terms of biological role, is associated with a DNA binding complex that binds to the G box, a well-characterized cis-acting DNA regulatory element found in plant genes. May be involved in cell cycle regulation by binding to soluble EDE1 and sequestering it in an inactive form during the early stages of mitosis. This Arabidopsis thaliana (Mouse-ear cress) protein is 14-3-3-like protein GF14 upsilon (GRF5).